The following is a 356-amino-acid chain: Probable dual-specificity RNA methyltransferase RlmN (356 aa).

Glu100 (proton acceptor) is an active-site residue. The region spanning 106–340 is the Radical SAM core domain; it reads TQQRLTVCLS…VSLRASRGLD (235 aa). Cys113 and Cys345 are joined by a disulfide. 3 residues coordinate [4Fe-4S] cluster: Cys120, Cys124, and Cys127. Residues 167–168, Ser197, 226–228, and Asn302 contribute to the S-adenosyl-L-methionine site; these read GE and SLH. The active-site S-methylcysteine intermediate is Cys345.

The protein belongs to the radical SAM superfamily. RlmN family. The cofactor is [4Fe-4S] cluster.

It localises to the cytoplasm. The catalysed reaction is adenosine(2503) in 23S rRNA + 2 reduced [2Fe-2S]-[ferredoxin] + 2 S-adenosyl-L-methionine = 2-methyladenosine(2503) in 23S rRNA + 5'-deoxyadenosine + L-methionine + 2 oxidized [2Fe-2S]-[ferredoxin] + S-adenosyl-L-homocysteine. The enzyme catalyses adenosine(37) in tRNA + 2 reduced [2Fe-2S]-[ferredoxin] + 2 S-adenosyl-L-methionine = 2-methyladenosine(37) in tRNA + 5'-deoxyadenosine + L-methionine + 2 oxidized [2Fe-2S]-[ferredoxin] + S-adenosyl-L-homocysteine. Functionally, specifically methylates position 2 of adenine 2503 in 23S rRNA and position 2 of adenine 37 in tRNAs. The polypeptide is Probable dual-specificity RNA methyltransferase RlmN (Prochlorococcus marinus (strain MIT 9303)).